Consider the following 134-residue polypeptide: Acyl carrier protein, chloroplastic (134 aa).

Residues 1 to 51 (MSTTFCSSVSMQATSLAATTRISFQKPALVSRTNLSFNLSRSIPTRLSVSC) constitute a chloroplast transit peptide. One can recognise a Carrier domain in the interval 55–130 (PETVEKVSKI…EAAELIDELV (76 aa)). At Ser90 the chain carries O-(pantetheine 4'-phosphoryl)serine.

Belongs to the acyl carrier protein (ACP) family. In terms of processing, 4'-phosphopantetheine is transferred from CoA to a specific serine of apo-ACP by acpS. This modification is essential for activity because fatty acids are bound in thioester linkage to the sulfhydryl of the prosthetic group. Seed.

It is found in the plastid. The protein resides in the chloroplast. Its pathway is lipid metabolism; fatty acid biosynthesis. Its function is as follows. Carrier of the growing fatty acid chain in fatty acid biosynthesis. The sequence is that of Acyl carrier protein, chloroplastic (ACL1.A1) from Brassica napus (Rape).